A 414-amino-acid chain; its full sequence is 2,3-diketo-5-methylthiopentyl-1-phosphate enolase (414 aa).

Lys99 (proton acceptor) is an active-site residue. Substrate is bound by residues Lys148, 174–177, His265, Gly338, and 360–361; these read KDDE and GG. Residues Lys174, Asp176, and Glu177 each contribute to the Mg(2+) site. Lys174 is modified (N6-carboxylysine).

The protein belongs to the RuBisCO large chain family. Type IV subfamily. In terms of assembly, homodimer. Requires Mg(2+) as cofactor.

The enzyme catalyses 5-methylsulfanyl-2,3-dioxopentyl phosphate = 2-hydroxy-5-methylsulfanyl-3-oxopent-1-enyl phosphate. It functions in the pathway amino-acid biosynthesis; L-methionine biosynthesis via salvage pathway; L-methionine from S-methyl-5-thio-alpha-D-ribose 1-phosphate: step 3/6. Catalyzes the enolization of 2,3-diketo-5-methylthiopentyl-1-phosphate (DK-MTP-1-P) into 2-hydroxy-3-keto-5-methylthiopentenyl-1-phosphate (HK-MTPenyl-1-P). This is 2,3-diketo-5-methylthiopentyl-1-phosphate enolase from Bacillus cereus (strain ATCC 14579 / DSM 31 / CCUG 7414 / JCM 2152 / NBRC 15305 / NCIMB 9373 / NCTC 2599 / NRRL B-3711).